Consider the following 289-residue polypeptide: 33 kDa chaperonin (289 aa).

Intrachain disulfides connect cysteine 225-cysteine 227 and cysteine 258-cysteine 261.

Belongs to the HSP33 family. Under oxidizing conditions two disulfide bonds are formed involving the reactive cysteines. Under reducing conditions zinc is bound to the reactive cysteines and the protein is inactive.

The protein resides in the cytoplasm. Redox regulated molecular chaperone. Protects both thermally unfolding and oxidatively damaged proteins from irreversible aggregation. Plays an important role in the bacterial defense system toward oxidative stress. The chain is 33 kDa chaperonin from Nitrosococcus oceani (strain ATCC 19707 / BCRC 17464 / JCM 30415 / NCIMB 11848 / C-107).